The sequence spans 329 residues: MQGSVTEFLKPRLVDIEQVSLTHAKVTLEPLERGFGHTLGNALRRILLSSMPGCAVTEVEIEGVLHEYSTKEGVQEDILEILLNLKGLAVKVEGKDEVIITLNKSGAGPVVAGDITHDGDVEIANPEHVICHLTDDNAEISMRIKVERGRGYVPSTARIHTEEDERPIGRLLVDATYSPVDKISYAVEAARVEQRTDLDKLVIDMETNGTLDPEEAIRRAATILAEQLDAFVDLRDVRVPEEKEEKPEFDPILLRPVDDLELTVRSANCLKAEAIHYIGDLVQRTEVELLKTPNLGKKSLTEIKDVLASRGLSLGMRLENWPPASIAED.

The alpha N-terminal domain (alpha-NTD) stretch occupies residues 1–235 (MQGSVTEFLK…EQLDAFVDLR (235 aa)). Positions 249–329 (FDPILLRPVD…NWPPASIAED (81 aa)) are alpha C-terminal domain (alpha-CTD).

This sequence belongs to the RNA polymerase alpha chain family. Homodimer. The RNAP catalytic core consists of 2 alpha, 1 beta, 1 beta' and 1 omega subunit. When a sigma factor is associated with the core the holoenzyme is formed, which can initiate transcription.

The catalysed reaction is RNA(n) + a ribonucleoside 5'-triphosphate = RNA(n+1) + diphosphate. Its function is as follows. DNA-dependent RNA polymerase catalyzes the transcription of DNA into RNA using the four ribonucleoside triphosphates as substrates. The polypeptide is DNA-directed RNA polymerase subunit alpha (Aliivibrio salmonicida (strain LFI1238) (Vibrio salmonicida (strain LFI1238))).